We begin with the raw amino-acid sequence, 102 residues long: Acid shock protein (102 aa).

An N-terminal signal peptide occupies residues Met-1–Ala-21. The span at Ala-22–Lys-41 shows a compositional bias: low complexity. A propeptide spanning residues Ala-22–Gln-58 is cleaved from the precursor. The disordered stretch occupies residues Ala-22–Ala-102. The segment covering Ala-80–His-90 has biased composition (basic residues). The span at Gln-91–Ala-102 shows a compositional bias: low complexity.

It belongs to the Asr family. Proteolytic processing gives rise to the active protein.

Its subcellular location is the periplasm. In terms of biological role, required for growth and/or survival at acidic conditions. The protein is Acid shock protein of Escherichia coli O17:K52:H18 (strain UMN026 / ExPEC).